A 75-amino-acid chain; its full sequence is Small ribosomal subunit protein bS18 (75 aa).

This sequence belongs to the bacterial ribosomal protein bS18 family. Part of the 30S ribosomal subunit. Forms a tight heterodimer with protein bS6.

Functionally, binds as a heterodimer with protein bS6 to the central domain of the 16S rRNA, where it helps stabilize the platform of the 30S subunit. In Thermotoga sp. (strain RQ2), this protein is Small ribosomal subunit protein bS18.